The primary structure comprises 570 residues: Sulfite reductase [NADPH] hemoprotein beta-component (570 aa).

[4Fe-4S] cluster is bound by residues Cys-434, Cys-440, Cys-479, and Cys-483. Cys-483 is a binding site for siroheme.

This sequence belongs to the nitrite and sulfite reductase 4Fe-4S domain family. Alpha(8)-beta(8). The alpha component is a flavoprotein, the beta component is a hemoprotein. Requires siroheme as cofactor. It depends on [4Fe-4S] cluster as a cofactor.

It catalyses the reaction hydrogen sulfide + 3 NADP(+) + 3 H2O = sulfite + 3 NADPH + 4 H(+). Its pathway is sulfur metabolism; hydrogen sulfide biosynthesis; hydrogen sulfide from sulfite (NADPH route): step 1/1. Its function is as follows. Component of the sulfite reductase complex that catalyzes the 6-electron reduction of sulfite to sulfide. This is one of several activities required for the biosynthesis of L-cysteine from sulfate. The sequence is that of Sulfite reductase [NADPH] hemoprotein beta-component from Enterobacter sp. (strain 638).